We begin with the raw amino-acid sequence, 303 residues long: Probable cell division protein WhiA (303 aa).

A DNA-binding region (H-T-H motif) is located at residues 272–303; it reads SIQQIADSLETPLSKSGVNHRLRKINKIADEL.

Belongs to the WhiA family.

In terms of biological role, involved in cell division and chromosome segregation. The chain is Probable cell division protein WhiA from Streptococcus agalactiae serotype Ia (strain ATCC 27591 / A909 / CDC SS700).